Consider the following 571-residue polypeptide: Dihydroxy-acid dehydratase (571 aa).

[2Fe-2S] cluster is bound at residue C56. D88 lines the Mg(2+) pocket. C129 is a [2Fe-2S] cluster binding site. D130 and K131 together coordinate Mg(2+). K131 is modified (N6-carboxylysine). [2Fe-2S] cluster is bound at residue C201. Residue E452 participates in Mg(2+) binding. The Proton acceptor role is filled by S478.

Belongs to the IlvD/Edd family. In terms of assembly, homodimer. Requires [2Fe-2S] cluster as cofactor. The cofactor is Mg(2+).

It catalyses the reaction (2R)-2,3-dihydroxy-3-methylbutanoate = 3-methyl-2-oxobutanoate + H2O. The enzyme catalyses (2R,3R)-2,3-dihydroxy-3-methylpentanoate = (S)-3-methyl-2-oxopentanoate + H2O. It participates in amino-acid biosynthesis; L-isoleucine biosynthesis; L-isoleucine from 2-oxobutanoate: step 3/4. The protein operates within amino-acid biosynthesis; L-valine biosynthesis; L-valine from pyruvate: step 3/4. Functions in the biosynthesis of branched-chain amino acids. Catalyzes the dehydration of (2R,3R)-2,3-dihydroxy-3-methylpentanoate (2,3-dihydroxy-3-methylvalerate) into 2-oxo-3-methylpentanoate (2-oxo-3-methylvalerate) and of (2R)-2,3-dihydroxy-3-methylbutanoate (2,3-dihydroxyisovalerate) into 2-oxo-3-methylbutanoate (2-oxoisovalerate), the penultimate precursor to L-isoleucine and L-valine, respectively. In Streptococcus suis (strain 98HAH33), this protein is Dihydroxy-acid dehydratase.